A 753-amino-acid polypeptide reads, in one-letter code: Elongin-A2 (753 aa).

In terms of domain architecture, TFIIS N-terminal spans 5–80 (STTLHAVEKL…ARWKKLVLVD (76 aa)). 3 disordered regions span residues 80 to 245 (DRNT…DWHS), 261 to 453 (ETPR…GPKT), and 477 to 497 (LSDS…SPKF). Basic and acidic residues-rich tracts occupy residues 147 to 157 (HSREPRAERKC) and 271 to 285 (ARDR…DKEG). Residues 306–317 (KRPQHSHSNKKR) show a composition bias toward basic residues. Basic and acidic residues predominate over residues 333 to 348 (SPEEKEQLSNDRETQE). Residues 366-377 (EVEEVDMAEEFE) show a composition bias toward acidic residues. The segment covering 409–428 (DKQRKANESKGTRESWDSAK) has biased composition (basic and acidic residues). The segment at 500–659 (EAAFPGRRVN…TPYDTSRRQE (160 aa)) is activation domain. The BC-box stretch occupies residues 528-537 (TLRQQCAQVL). Positions 528–537 (TLRQQCAQVL) are interacting with Elongin BC complex. The interval 650–735 (TPYDTSRRQE…KTRKQAAKKV (86 aa)) is disordered. Over residues 654–663 (TSRRQEKSAG) the composition is skewed to basic and acidic residues. A compositionally biased stretch (low complexity) spans 680-700 (GSSHTPSSQSSSGGGRDSSSS).

In terms of assembly, heterotrimer of an A (ELOA, ELOA2 or ELOA3P), ELOB and ELOC subunit. As to expression, specifically expressed in testis.

It is found in the nucleus. In terms of biological role, SIII, also known as elongin, is a general transcription elongation factor that increases the RNA polymerase II transcription elongation past template-encoded arresting sites. Subunit A2 is transcriptionally active but its transcription activity is not enhanced by binding to the dimeric complex of the SIII regulatory subunits B and C (elongin BC complex). In Homo sapiens (Human), this protein is Elongin-A2.